Consider the following 590-residue polypeptide: Multidrug and toxin extrusion protein 1 (590 aa).

Residues 1-59 (MDSITSYNVTQMNGDTKQEKCDDVLSTSSTQKFCGGCRKKLRSLLPVNYKTEIVELLKL) lie on the Cytoplasmic side of the membrane. Residues 60-80 (AGPVFISQLMIFLISFVSTVF) traverse the membrane as a helical segment. Residues 81-88 (CGHLGKTE) are Extracellular-facing. The chain crosses the membrane as a helical span at residues 89–109 (LAGVALAIAVINVTGISIGSG). The Cytoplasmic portion of the chain corresponds to 110 to 137 (LASACDTLISQTFGSNNLKRVGVILQRG). A helical membrane pass occupies residues 138–158 (ILILLLACFPCWALLINTEPI). The Extracellular segment spans residues 159-167 (LLAVRQSPN). Residues 168–188 (VASLSQLYVKIFMPALPAAFM) form a helical membrane-spanning segment. Topologically, residues 189–199 (YQLQGRYLQNQ) are cytoplasmic. The chain crosses the membrane as a helical span at residues 200–222 (GIIWPQVITGAAGNILNALINYV). Residues 223–231 (FLHLLELGV) lie on the Extracellular side of the membrane. A helical membrane pass occupies residues 232-254 (AGSAAANTISQYSLAVFLYVYIR). Topologically, residues 255 to 274 (WKNLHKATWDGWSRDCLQEW) are cytoplasmic. The helical transmembrane segment at 275–294 (GAFIRLALPSMLMLCVEWWT) threads the bilayer. Residues 295–313 (YEIGGFLAGLISETELGAQ) lie on the Extracellular side of the membrane. The chain crosses the membrane as a helical span at residues 314-334 (SVVYELATIAYMFPLGFAVAA). Residues 335–351 (SVRVGNALGAGNTERAK) are Cytoplasmic-facing. Residues 352–372 (LSAKVALVCGVLVSCVVATLI) traverse the membrane as a helical segment. At 373-395 (GCTKDVIAYIFTTEEEIVSRVSQ) the chain is on the extracellular side. Residues 396-416 (VMIMYGFFHLFDAIAGITGGI) traverse the membrane as a helical segment. Residues 417 to 430 (VRGAGKQLLGALCN) are Cytoplasmic-facing. Residues 431-451 (IVGYYFVGFPTGVSLMFALSM) traverse the membrane as a helical segment. Residue glycine 452 is a topological domain, extracellular. The helical transmembrane segment at 453-473 (IIGLWIGFFGCVFLQSLFFII) threads the bilayer. Over 474 to 565 (LIYKLDWKKA…TTKQLIVRRG (92 aa)) the chain is Cytoplasmic. Residues 566–586 (LAVLLMVLILAGGIVLNEMLV) form a helical membrane-spanning segment. Over 587–590 (RYLR) the chain is Extracellular.

The protein belongs to the multi antimicrobial extrusion (MATE) (TC 2.A.66.1) family.

It is found in the cell membrane. Solute transporter for tetraethylammonium (TEA), cimetidine, metformin, guanidine, N-methylnicotinamide (NMN) and also the zwitterionic cephalosporin cephalexin. Responsible for the secretion of cationic drugs across the brush border membranes. The chain is Multidrug and toxin extrusion protein 1 (slc47a1) from Danio rerio (Zebrafish).